The primary structure comprises 327 residues: L-serine dehydratase/L-threonine deaminase (327 aa).

Ala2 is modified (N-acetylalanine). Lys41 carries the N6-(pyridoxal phosphate)lysine modification. Pyridoxal 5'-phosphate is bound at residue Pro128.

Belongs to the serine/threonine dehydratase family. In terms of assembly, homodimer. Requires pyridoxal 5'-phosphate as cofactor.

Its subcellular location is the cytoplasm. The enzyme catalyses L-serine = pyruvate + NH4(+). The catalysed reaction is L-threonine = 2-oxobutanoate + NH4(+). It functions in the pathway carbohydrate biosynthesis; gluconeogenesis. Functionally, catalyzes the pyridoxal-phosphate-dependent dehydrative deamination of L-threonine and L-serine to ammonia and alpha-ketobutyrate and pyruvate, respectively. This Mus musculus (Mouse) protein is L-serine dehydratase/L-threonine deaminase (Sds).